The following is a 410-amino-acid chain: MSSDPKISITSFLECLSEIEEEFLRDKEKNPPVLVSKLQELQQKTPNNIANLDHDPETIQKIHQTTHRINVAVKAFICIDQTFVSLRSDAVEDASRALKKANASSPVVGCRELSEDLPAYHMRKHFLHTLENPYPTQEEKETLVRLTNESTARVGQSIVNRPPLEVHQLTLWFINARRRSGWSHILKKFAREDRSRMKHLVRAKLSSSNQSTPPSPTSEYPSNNLDDFLSDNLGRPLTPADKQQFEDDWASMISWIKYGVKEKVGDWVYDLCAASKKTPKPGMPRPVTTVAKRQPARKTKPAAKPKSRTANPRASTTPSIDSTLDSSKLESTPELSMCSTADTSFSTFGSSLSMSHYDPFQYGNDILQSPTFKARGNRKVKALPKRAGKQQPDEVENGKIPFLCLSVAFV.

A variable domain between B alleles region spans residues 1–110 (MSSDPKISIT…ANASSPVVGC (110 aa)). Positions 107 to 184 (VVGCRELSED…NARRRSGWSH (78 aa)) form a DNA-binding region, homeobox; TALE-type. Positions 111–410 (RELSEDLPAY…PFLCLSVAFV (300 aa)) are highly conserved between B alleles. 3 disordered regions span residues 202–241 (RAKL…TPAD), 278–335 (TPKP…TPEL), and 375–394 (RGNR…QPDE). Positions 206–222 (SSSNQSTPPSPTSEYPS) are enriched in low complexity. The Nuclear localization signal signature appears at 276 to 308 (KKTPKPGMPRPVTTVAKRQPARKTKPAAKPKSR). Residues 294–307 (QPARKTKPAAKPKS) are compositionally biased toward basic residues. The segment covering 312–335 (PRASTTPSIDSTLDSSKLESTPEL) has biased composition (polar residues). Residues 333–410 (PELSMCSTAD…PFLCLSVAFV (78 aa)) are not essential for B4 function. The span at 375–388 (RGNRKVKALPKRAG) shows a compositional bias: basic residues.

This sequence belongs to the TALE/M-ATYP homeobox family.

Its subcellular location is the nucleus. Functionally, the B locus has at least 25 alleles, and any combination of two different B alleles yields a multimeric regulatory protein, that activates genes responsible for the pathogenicity and for the sexual development of the fungus within the corn plant. This is Mating-type locus allele B4 protein from Mycosarcoma maydis (Corn smut fungus).